Consider the following 308-residue polypeptide: MVGLQPSEVPPTTVVKFLGAGTAACFADLLTFPLDTAKVRLQIQGENPGAQSVQYRGVLGTILTMVRTEGPRSPYSGLVAGLHRQMSFASIRIGLYDSVKQFYTPKGADHSSVAIRILAGCTTGAMAVTCAQPTDVVKVRFQAMIRLGTGGERKYRGTMDAYRTIAREEGVRGLWKGTWPNITRNAIVNCAEMVTYDIIKEKLLESHLFTDNFPCHFVSAFGAGFCATVVASPVDVVKTRYMNAPLGRYRSPLHCMLKMVAQEGPTAFYKGFVPSFLRLGAWNVMMFVTYEQLKRALMKVQVLRESPF.

Residues 1–10 (MVGLQPSEVP) lie on the Mitochondrial intermembrane side of the membrane. Residues 11 to 32 (PTTVVKFLGAGTAACFADLLTF) form a helical membrane-spanning segment. Solcar repeat units lie at residues 11-102 (PTTV…VKQF), 111-202 (SSVA…IKEK), and 211-296 (DNFP…LKRA). Topologically, residues 33 to 73 (PLDTAKVRLQIQGENPGAQSVQYRGVLGTILTMVRTEGPRS) are mitochondrial matrix. A helical transmembrane segment spans residues 74–96 (PYSGLVAGLHRQMSFASIRIGLY). The Mitochondrial intermembrane portion of the chain corresponds to 97 to 116 (DSVKQFYTPKGADHSSVAIR). Residues 117 to 133 (ILAGCTTGAMAVTCAQP) form a helical membrane-spanning segment. The Mitochondrial matrix segment spans residues 134 to 179 (TDVVKVRFQAMIRLGTGGERKYRGTMDAYRTIAREEGVRGLWKGTW). The chain crosses the membrane as a helical span at residues 180-196 (PNITRNAIVNCAEMVTY). Over 197 to 213 (DIIKEKLLESHLFTDNF) the chain is Mitochondrial intermembrane. Residues 214 to 233 (PCHFVSAFGAGFCATVVASP) form a helical membrane-spanning segment. At 234–267 (VDVVKTRYMNAPLGRYRSPLHCMLKMVAQEGPTA) the chain is on the mitochondrial matrix side. A helical transmembrane segment spans residues 268–290 (FYKGFVPSFLRLGAWNVMMFVTY). The purine nucleotide binding stretch occupies residues 275-297 (SFLRLGAWNVMMFVTYEQLKRAL). At 291 to 308 (EQLKRALMKVQVLRESPF) the chain is on the mitochondrial intermembrane side.

This sequence belongs to the mitochondrial carrier (TC 2.A.29) family. Interacts with HAX1; the interaction is direct and calcium-dependent.

It localises to the mitochondrion inner membrane. With respect to regulation, inhibited by purine nucleotides and inorganic phosphate (in vitro). Functionally, putative transmembrane transporter that plays a role in mitochondrial metabolism via an as yet unclear mechanism. Originally, this mitochondrial protein was thought to act as a proton transmembrane transporter from the mitochondrial intermembrane space into the matrix, causing proton leaks through the inner mitochondrial membrane, thereby uncoupling mitochondrial membrane potential generation from ATP synthesis. However, this function is controversial and uncoupling may not be the function, or at least not the main function, but rather a consequence of more conventional metabolite transporter activity. This Mus musculus (Mouse) protein is Putative mitochondrial transporter UCP3.